The sequence spans 608 residues: DNA mismatch repair protein MutL (608 aa).

It belongs to the DNA mismatch repair MutL/HexB family.

Its function is as follows. This protein is involved in the repair of mismatches in DNA. It is required for dam-dependent methyl-directed DNA mismatch repair. May act as a 'molecular matchmaker', a protein that promotes the formation of a stable complex between two or more DNA-binding proteins in an ATP-dependent manner without itself being part of a final effector complex. The protein is DNA mismatch repair protein MutL of Elusimicrobium minutum (strain Pei191).